The chain runs to 206 residues: LexA repressor (206 aa).

The H-T-H motif DNA-binding region spans 27 to 47 (YEEIRQNLGFRSLNAVFKHLK). Residues Ser120 and Lys157 each act as for autocatalytic cleavage activity in the active site.

This sequence belongs to the peptidase S24 family. Homodimer.

The enzyme catalyses Hydrolysis of Ala-|-Gly bond in repressor LexA.. In terms of biological role, represses a number of genes involved in the response to DNA damage (SOS response), including recA and lexA. In the presence of single-stranded DNA, RecA interacts with LexA causing an autocatalytic cleavage which disrupts the DNA-binding part of LexA, leading to derepression of the SOS regulon and eventually DNA repair. The chain is LexA repressor from Syntrophobacter fumaroxidans (strain DSM 10017 / MPOB).